Here is a 173-residue protein sequence, read N- to C-terminus: MNSQLTLRALERGDLRFIHNLNNNRNIMSYWFEEPYESFDELEELYNKHIHDNAERRFVVEDAQKNLIGLVELIEINYIHRSAEFQIIIAPEHQGKGFARTLINRALDYSFTILNLHKIYLHVAVENPKAVHLYEECGFVEEGHLVEEFFINGRYQDVKRMYILQSKYLNRSE.

The N-acetyltransferase domain occupies 5–162; the sequence is LTLRALERGD…GRYQDVKRMY (158 aa). Spermine is bound by residues M28, E33, E41, and 49 to 52; that span reads HIHD. Mg(2+) is bound at residue E33. E33 and E41 together coordinate spermidine. E75 contacts Mg(2+). 84 to 86 is a binding site for spermine; it reads EFQ. Residues 87-89, 94-100, and 127-136 contribute to the acetyl-CoA site; these read III, QGKGFAR, and NPKAVHLYEE. Y134 acts as the Proton donor in catalysis.

It belongs to the acetyltransferase family. In terms of assembly, homododecamer; dimer of hexamers. Exists in solution in a variety of protein homooligomeric states including dodecamers in an open state. The presence of the polyamines spermidine or spermine shifts the equilibrium to dodecamers and induces the formation of the closed, symmetric dodecamers.

The protein localises to the cytoplasm. It carries out the reaction an alkane-alpha,omega-diamine + acetyl-CoA = an N-acetylalkane-alpha,omega-diamine + CoA + H(+). The enzyme catalyses spermidine + acetyl-CoA = N(1)-acetylspermidine + CoA + H(+). The catalysed reaction is spermidine + acetyl-CoA = N(8)-acetylspermidine + CoA + H(+). It catalyses the reaction spermine + acetyl-CoA = N(1)-acetylspermine + CoA + H(+). The protein operates within amine and polyamine degradation; spermidine degradation. It participates in amine and polyamine degradation; spermine degradation. Its activity is regulated as follows. Allosterically regulated by polyamines. Polyamines trigger conformational changes and induce the symmetric closed dodecameric state of the protein when they bind to their allosteric sites. Its function is as follows. Involved in the protection against polyamine toxicity by regulating their concentration. Catalyzes the transfer of an acetyl group from acetyl coenzyme A (AcCoA) to the primary amino groups of spermidine to yield N(1)- and N(8)-acetylspermidine. It can use polyamines such as spermine and N(1)-acetylspermine, but not putrescine or cadaverine. The sequence is that of Spermidine N(1)-acetyltransferase (speG) from Vibrio cholerae serotype O1 (strain ATCC 39315 / El Tor Inaba N16961).